A 554-amino-acid chain; its full sequence is Glutamine--tRNA ligase (554 aa).

The short motif at 34–44 (PEPNGYLHIGH) is the 'HIGH' region element. Residues 35–37 (EPN) and 41–47 (HIGHAKS) contribute to the ATP site. Residues Asp67 and Tyr212 each contribute to the L-glutamine site. ATP is bound by residues Thr231, 261-262 (RL), and 269-271 (MSK). Positions 268–272 (IMSKR) match the 'KMSKS' region motif.

This sequence belongs to the class-I aminoacyl-tRNA synthetase family. In terms of assembly, monomer.

It localises to the cytoplasm. The catalysed reaction is tRNA(Gln) + L-glutamine + ATP = L-glutaminyl-tRNA(Gln) + AMP + diphosphate. The chain is Glutamine--tRNA ligase from Serratia proteamaculans (strain 568).